Consider the following 1087-residue polypeptide: DYRK-family kinase pom1 (1087 aa).

Disordered regions lie at residues Cys57–Ile81, Leu120–Phe182, Met238–Ile308, and Asn336–Ser578. Residues Ser62 to Ile81 are compositionally biased toward low complexity. 2 stretches are compositionally biased toward polar residues: residues Lys132–Leu165 and Trp246–His256. The segment covering Ser292–Thr307 has biased composition (low complexity). Positions Asn336–Val361 are enriched in polar residues. Over residues Ser362–Ser373 the composition is skewed to low complexity. The segment covering Val397–His407 has biased composition (basic and acidic residues). Over residues Arg429 to Ser442 the composition is skewed to low complexity. Basic residues predominate over residues Asn478 to Ser488. Ser513 is modified (phosphoserine). A compositionally biased stretch (basic and acidic residues) spans Val527–Glu536. The span at Gln555 to Ser578 shows a compositional bias: polar residues. Residues Tyr699–Leu995 enclose the Protein kinase domain. Residues Leu705 to Val713 and Lys728 contribute to the ATP site. Asp825 functions as the Proton acceptor in the catalytic mechanism. 2 disordered regions span residues His992 to Gln1011 and Pro1017 to Ser1056. A compositionally biased stretch (polar residues) spans Glu1045–Arg1055.

Belongs to the protein kinase superfamily. CMGC Ser/Thr protein kinase family. MNB/DYRK subfamily. In terms of assembly, interacts with rga4. Interacts with tea4; this interaction triggers pom1 plasma membrane association. Post-translationally, autophosphorylates at the cell cortex to lower lipid affinity and promote membrane release. Dephosphorylation by dis2, regulated by tea4, triggers membrane association.

The protein resides in the cell tip. Its subcellular location is the cell membrane. It carries out the reaction L-seryl-[protein] + ATP = O-phospho-L-seryl-[protein] + ADP + H(+). The catalysed reaction is L-threonyl-[protein] + ATP = O-phospho-L-threonyl-[protein] + ADP + H(+). It catalyses the reaction L-tyrosyl-[protein] + ATP = O-phospho-L-tyrosyl-[protein] + ADP + H(+). Polarity factor involved in localization of polarized growth and cytokinesis. Forms an intracellular gradient that serves to measure cell length and control mitotic entry. Controls the timing of mitotic commitment by regulating the inhibitory impact of cdr1/cdr2 on wee1 activity. Directly phosphorylates the tail of cdr2 which inhibits cdr2 activation by ssp1. Cdr2 phosphorylation by pom1 also modulates cdr2 association with membranes and inhibits cdr2 interaction with mid1, reducing its clustering ability, possibly via the down-regulation of cdr2 kinase activity. Acts as a negative regulator of mid1 distribution, excluding mid1 from non-growing ends, which prevents division-septum assembly at the cell ends. The pom1 polar gradient also mediates mitotic entry by regulating cdk1. Plays an essential role in proper localization and phosphorylation of a GAP for cdc42, rga4, which ensures bipolar localization of GTP-bound, active cdc42 involved in F-actin formation. Phosphorylates multiple other substrates that function in polarized cell growth, including tea4, mod5, pal1, the Rho GAP rga7, and the Arf GEF syt22. This is DYRK-family kinase pom1 from Schizosaccharomyces pombe (strain 972 / ATCC 24843) (Fission yeast).